A 382-amino-acid chain; its full sequence is Plasmid replication initiator protein TrfA (382 aa).

A toxic in E.coli strain K12 / DH5-alpha; may be membrane-associated region spans residues 1-163 (MNRTFDRKAY…TARSALFTTR (163 aa)). Residues 246–265 (SRLQATAMGFTSDRVGHLES) constitute a DNA-binding region (H-T-H motif). The hydrophobic region (HR); required for membrane association stretch occupies residues 286-297 (VLIDEEIVVLFA).

As to quaternary structure, forms a dimer in solution, binds DNA as a monomer. Both mononer and dimer of the short form interact with Hda (Dp).

It localises to the cell inner membrane. Functionally, required for initiation of plasmid DNA replication, along with host-derived DnaA and other host proteins. Both forms of the protein are capable of initiating plasmid replication in a number of Gram-negative bacteria. Binds to 8 17-base pair repeat sequences (iterons) in the RK2 minimal replication origin (oriV), opening the origin of replication. oriV opening does not absolutely require the presence of nucleotides; formation of open complex is somewhat enhanced by ATP or ATP gamma S, while DnaA or HU is required for full opening. In terms of biological role, also involved in plasmid copy number control, promoting intermolecular coupling of protein bound iterons at oriV, which inhibits replication initiation. The sequence is that of Plasmid replication initiator protein TrfA (trfA) from Escherichia coli.